A 384-amino-acid polypeptide reads, in one-letter code: MKAVHFGAGNIGRGFVGLLLHQAGYELVFADVAEELISQLAAADSYDVHEVGDNPTVRTVDNFRALNSATQEADVVAEIATADVVTTAVGPHILKFVAPVIAKGIAARAAGLAPLQVMACENAINATDILRDEVAAQWDPAAGPLEAVAVFANTAVDRIVPNQEPGKGLDVTVETFYEWVIDRTPFGDNVPVIPGATFVDNLEPYIERKLFTVNTGHAAAAYFGFEAGLSKISEAMADQDVAADVRAVLDETKELLIHKHGFNREEQEAYVEKILGRFTNPHLPDTVNRVGRAPLRKLSRHERFIGPAAELAERGIVPEALLGAIAAALRFNDPADAEAAELAQIVASSTAAEATEKVTGLTPGHPLFAAVEALVEEVKAEVKA.

Position 3-14 (Ala-3–Gly-14) interacts with NAD(+).

Belongs to the mannitol dehydrogenase family.

It catalyses the reaction D-mannitol 1-phosphate + NAD(+) = beta-D-fructose 6-phosphate + NADH + H(+). The chain is Mannitol-1-phosphate 5-dehydrogenase from Arthrobacter sp. (strain FB24).